The following is a 295-amino-acid chain: Ankyrin repeat and SOCS box protein 17 (295 aa).

An ANK repeat occupies 146-176 (SGITPLFYVAQTRQSNIFKILLQYGILEREK). Residues 232–295 (LGRRPIISNW…RLQNYLNLEI (64 aa)) enclose the SOCS box domain.

It belongs to the ankyrin SOCS box (ASB) family.

It functions in the pathway protein modification; protein ubiquitination. In terms of biological role, may be a substrate-recognition component of a SCF-like ECS (Elongin-Cullin-SOCS-box protein) E3 ubiquitin-protein ligase complex which mediates the ubiquitination and subsequent proteasomal degradation of target proteins. This is Ankyrin repeat and SOCS box protein 17 (ASB17) from Macaca fascicularis (Crab-eating macaque).